Consider the following 86-residue polypeptide: Large ribosomal subunit protein bL31 (86 aa).

Residues 64 to 86 form a disordered region; it reads KYGMGSANSSESKDQKEEKDSKK. Positions 74–86 are enriched in basic and acidic residues; the sequence is ESKDQKEEKDSKK.

The protein belongs to the bacterial ribosomal protein bL31 family. Type A subfamily. Part of the 50S ribosomal subunit.

Binds the 23S rRNA. The sequence is that of Large ribosomal subunit protein bL31 from Prochlorococcus marinus (strain MIT 9301).